An 80-amino-acid polypeptide reads, in one-letter code: ATP synthase subunit c (80 aa).

2 consecutive transmembrane segments (helical) span residues 11–31 (IAAT…IGIL) and 54–74 (FIVM…GLYI).

The protein belongs to the ATPase C chain family. As to quaternary structure, F-type ATPases have 2 components, F(1) - the catalytic core - and F(0) - the membrane proton channel. F(1) has five subunits: alpha(3), beta(3), gamma(1), delta(1), epsilon(1). F(0) has three main subunits: a(1), b(2) and c(10-14). The alpha and beta chains form an alternating ring which encloses part of the gamma chain. F(1) is attached to F(0) by a central stalk formed by the gamma and epsilon chains, while a peripheral stalk is formed by the delta and b chains.

It is found in the cell membrane. In terms of biological role, f(1)F(0) ATP synthase produces ATP from ADP in the presence of a proton or sodium gradient. F-type ATPases consist of two structural domains, F(1) containing the extramembraneous catalytic core and F(0) containing the membrane proton channel, linked together by a central stalk and a peripheral stalk. During catalysis, ATP synthesis in the catalytic domain of F(1) is coupled via a rotary mechanism of the central stalk subunits to proton translocation. Key component of the F(0) channel; it plays a direct role in translocation across the membrane. A homomeric c-ring of between 10-14 subunits forms the central stalk rotor element with the F(1) delta and epsilon subunits. In Baumannia cicadellinicola subsp. Homalodisca coagulata, this protein is ATP synthase subunit c.